A 339-amino-acid polypeptide reads, in one-letter code: D-erythrose-4-phosphate dehydrogenase (339 aa).

12-13 (RI) lines the NAD(+) pocket. Substrate is bound by residues 154–156 (SCT), Arg-200, 213–214 (TK), and Arg-236. Cys-155 serves as the catalytic Nucleophile. Asn-318 contributes to the NAD(+) binding site.

Belongs to the glyceraldehyde-3-phosphate dehydrogenase family. Epd subfamily. Homotetramer.

The protein resides in the cytoplasm. It catalyses the reaction D-erythrose 4-phosphate + NAD(+) + H2O = 4-phospho-D-erythronate + NADH + 2 H(+). It functions in the pathway cofactor biosynthesis; pyridoxine 5'-phosphate biosynthesis; pyridoxine 5'-phosphate from D-erythrose 4-phosphate: step 1/5. Catalyzes the NAD-dependent conversion of D-erythrose 4-phosphate to 4-phosphoerythronate. The sequence is that of D-erythrose-4-phosphate dehydrogenase from Photorhabdus laumondii subsp. laumondii (strain DSM 15139 / CIP 105565 / TT01) (Photorhabdus luminescens subsp. laumondii).